A 507-amino-acid polypeptide reads, in one-letter code: Glycogen synthase (507 aa).

K15 contacts ADP-alpha-D-glucose.

The protein belongs to the glycosyltransferase 1 family. Bacterial/plant glycogen synthase subfamily.

It catalyses the reaction [(1-&gt;4)-alpha-D-glucosyl](n) + ADP-alpha-D-glucose = [(1-&gt;4)-alpha-D-glucosyl](n+1) + ADP + H(+). The protein operates within glycan biosynthesis; glycogen biosynthesis. Functionally, synthesizes alpha-1,4-glucan chains using ADP-glucose. The protein is Glycogen synthase of Rhodopirellula baltica (strain DSM 10527 / NCIMB 13988 / SH1).